Reading from the N-terminus, the 344-residue chain is uncharacterized protein (344 aa).

6 consecutive transmembrane segments (helical) span residues 155–175, 181–201, 221–241, 254–274, 291–311, and 319–339; these read IARI…IFLV, WGLG…AYGW, LSFI…VNGF, ISSF…FALL, FTII…AAYV, and ALQN…IGVF.

It to M.jannaschii MJ1032.

The protein localises to the cell membrane. This is an uncharacterized protein from Archaeoglobus fulgidus (strain ATCC 49558 / DSM 4304 / JCM 9628 / NBRC 100126 / VC-16).